We begin with the raw amino-acid sequence, 105 residues long: U2-lycotoxin-Ls1b (105 aa).

Residues 1 to 17 form the signal peptide; it reads MIKYVLISALLVVAVYS. Residues 18–41 constitute a propeptide that is removed on maturation; sequence FTIEDNEDALLEEAEDELDTEEER. Disulfide bonds link cysteine 51–cysteine 67, cysteine 58–cysteine 97, cysteine 60–cysteine 83, and cysteine 69–cysteine 81.

This sequence belongs to the neurotoxin 04 (omega-agtx) family. 01 (type I omega-agtx) subfamily. As to expression, expressed by the venom gland.

The protein localises to the secreted. Insecticidal to house crickets. It induces an excitatory slow-onset impact that leads to irreversible spastic paralysis. It also modifies human voltage-gated potassium channel Kv1.5/KCNA5. Most likely, it binds to the voltage-sensing domain of the channel, suggesting it does not block the pore but prevents its opening at physiological membrane potentials. The recombinant peptide binds to the channel in an irreversible manner and slows down the hKv1.5 current activation kinetics. It is not toxic to mice, when intracranially injected (at 0.5 ug/g mouse). The chain is U2-lycotoxin-Ls1b from Lycosa singoriensis (Wolf spider).